Consider the following 160-residue polypeptide: Nucleotide-binding protein Tgr7_1196 (160 aa).

This sequence belongs to the YajQ family.

In terms of biological role, nucleotide-binding protein. This Thioalkalivibrio sulfidiphilus (strain HL-EbGR7) protein is Nucleotide-binding protein Tgr7_1196.